Reading from the N-terminus, the 228-residue chain is Urease accessory protein UreE (228 aa).

The tract at residues 188 to 228 (PLDEPHGSGLHIHAIHSHGDGHSHDHDHSHSHGDHDHDHKH) is disordered. Basic and acidic residues predominate over residues 204–228 (SHGDGHSHDHDHSHSHGDHDHDHKH).

This sequence belongs to the UreE family.

Its subcellular location is the cytoplasm. In terms of biological role, involved in urease metallocenter assembly. Binds nickel. Probably functions as a nickel donor during metallocenter assembly. This Yersinia kristensenii protein is Urease accessory protein UreE.